A 289-amino-acid polypeptide reads, in one-letter code: Probable ABC transporter permease protein BruAb2_0483 (289 aa).

The next 6 helical transmembrane spans lie at 9–29 (FLIL…VVHL), 70–90 (VWTV…AIIL), 99–119 (VARV…AIFW), 144–166 (IQWL…LVTV), 213–233 (IAIV…WVMT), and 258–278 (FGEA…FTVI). Positions 65–279 (LWRTAVWTVA…AILLVFTVIY (215 aa)) constitute an ABC transmembrane type-1 domain.

The protein belongs to the binding-protein-dependent transport system permease family. As to quaternary structure, the complex is composed of two ATP-binding proteins (BruAb2_0487), two transmembrane proteins (BruAb2_0483) and a solute-binding protein (BruAb2_0484).

The protein resides in the cell inner membrane. Its function is as follows. Probably part of an ABC transporter complex. Probably responsible for the translocation of the substrate across the membrane. The protein is Probable ABC transporter permease protein BruAb2_0483 of Brucella abortus biovar 1 (strain 9-941).